The primary structure comprises 102 residues: ATP-dependent Clp protease adapter protein ClpS (102 aa).

Belongs to the ClpS family. Binds to the N-terminal domain of the chaperone ClpA.

In terms of biological role, involved in the modulation of the specificity of the ClpAP-mediated ATP-dependent protein degradation. The chain is ATP-dependent Clp protease adapter protein ClpS from Shewanella amazonensis (strain ATCC BAA-1098 / SB2B).